A 943-amino-acid polypeptide reads, in one-letter code: Receptor-like protein 35 (943 aa).

Residues 1-31 form the signal peptide; it reads MTGSWNPTSIIIPVTLSFLLSFIHNFADVVA. Over 32-897 the chain is Extracellular; the sequence is APTRHLCLPE…EEEDEEEISW (866 aa). Residues asparagine 67, asparagine 82, asparagine 118, asparagine 147, asparagine 171, asparagine 195, asparagine 219, and asparagine 222 are each glycosylated (N-linked (GlcNAc...) asparagine). LRR repeat units lie at residues 124–148, 150–171, 172–196, 198–220, 222–244, 245–267, 268–292, 293–317, 319–340, 341–364, and 366–389; these read LQNL…IGNL, HLTS…SIEN, LSRL…IGNL, HLTS…IGNL, NLTF…IGNL, ARLT…SFGN, LNQL…LLNL, TRLS…SLLS, LMDF…LFNI, PPLI…NISS, and SNLQ…LSRF. N-linked (GlcNAc...) asparagine glycans are attached at residues asparagine 291 and asparagine 312. N-linked (GlcNAc...) asparagine glycans are attached at residues asparagine 354 and asparagine 361. One copy of the LRR 12; degenerate repeat lies at 390–414; it reads VNLTLFDLSHLNTQCRPVDFSIFSH. A glycan (N-linked (GlcNAc...) asparagine) is linked at asparagine 391. 16 LRR repeats span residues 415 to 439, 440 to 463, 467 to 490, 491 to 514, 515 to 537, 544 to 568, 569 to 592, 593 to 617, 619 to 639, 640 to 665, 667 to 685, 686 to 709, 753 to 777, 778 to 801, 802 to 825, and 827 to 850; these read LKSL…ILPY, FKTL…SVSS, SQSI…LRTQ, HELG…LWTL, PNLF…SKKH, KPSM…ICGL, RSLN…MEKL, KSTL…IFES, RSLD…LIRF, SNLE…SLSK, QVLV…EATF, PELR…YFVK, LTIY…IGLL, KELL…MGNL, TALE…LGDL, and FLAY…QFRR. N-linked (GlcNAc...) asparagine glycosylation is present at asparagine 457. N-linked (GlcNAc...) asparagine glycosylation is found at asparagine 521, asparagine 524, asparagine 556, asparagine 582, and asparagine 605. A glycan (N-linked (GlcNAc...) asparagine) is linked at asparagine 653. Asparagine 699 carries an N-linked (GlcNAc...) asparagine glycan. 2 N-linked (GlcNAc...) asparagine glycosylation sites follow: asparagine 784 and asparagine 800. Residues asparagine 832, asparagine 852, and asparagine 882 are each glycosylated (N-linked (GlcNAc...) asparagine). Residues 898 to 918 traverse the membrane as a helical segment; that stretch reads IAAAIGFIPGIVFGLTIGYIL. Residues 919-943 lie on the Cytoplasmic side of the membrane; the sequence is VSYKPEWFMNPFGRNNRRRRNTTTH.

It belongs to the RLP family.

The protein localises to the cell membrane. This Arabidopsis thaliana (Mouse-ear cress) protein is Receptor-like protein 35.